We begin with the raw amino-acid sequence, 510 residues long: MSEKSRSDTSATASLSDSSKSPSSYSTPGTTTQKIIFPDGKLTKCLAFSAFVITLASFQFGYHIGCVNAPGGLITEWIIGSHKDLFDKELSRENADLAWSVAVSVFAVGGMIGGLSSGWLADKVGRRGALFYNNLLALAAAALMGLAKSVGAYPMVILGRLIIGLNCGFSSALVPMFLTEISPNNLRGMLGSLHQLLVTIAILVSQIFGLPHLLGTGDRWPLIFAFTVVPAVLQLALLMLCPESPKYTMAVRGQRNEAESALKKLRDTEDVSTEIEAMQEEATAAGVQEKPKMGDMFKGALLWPMSIAIMMMLAQQLSGINVAMFYSTVIFRGAGLTGNEPFYATIGMGAVNVIMTLISVWLVDHPKFGRRSLLLAGLTGMFVSTLLLVGALTIQNSGGDKWASYSAIGFVLLFVISFATGPGAIPWFFVSEIFDSSARGNANSIAVMVNWAANLLVGLTFLPINNLMQQYSFFIFSGFLAFFIFYTWKFVPETKGKSIEQIQAEFEKRK.

Residues 1–29 (MSEKSRSDTSATASLSDSSKSPSSYSTPG) are disordered. Over 1 to 46 (MSEKSRSDTSATASLSDSSKSPSSYSTPGTTTQKIIFPDGKLTKCL) the chain is Cytoplasmic. Positions 8–29 (DTSATASLSDSSKSPSSYSTPG) are enriched in low complexity. A helical membrane pass occupies residues 47–67 (AFSAFVITLASFQFGYHIGCV). At 68–100 (NAPGGLITEWIIGSHKDLFDKELSRENADLAWS) the chain is on the extracellular side. A helical membrane pass occupies residues 101–121 (VAVSVFAVGGMIGGLSSGWLA). Residues 122–127 (DKVGRR) are Cytoplasmic-facing. Residues 128–146 (GALFYNNLLALAAAALMGL) traverse the membrane as a helical segment. The Extracellular segment spans residues 147–160 (AKSVGAYPMVILGR). The chain crosses the membrane as a helical span at residues 161-181 (LIIGLNCGFSSALVPMFLTEI). Over 182 to 195 (SPNNLRGMLGSLHQ) the chain is Cytoplasmic. D-glucose is bound at residue Gln195. A helical transmembrane segment spans residues 196–216 (LLVTIAILVSQIFGLPHLLGT). Topologically, residues 217 to 219 (GDR) are extracellular. A helical membrane pass occupies residues 220–240 (WPLIFAFTVVPAVLQLALLML). Residues 241–299 (CPESPKYTMAVRGQRNEAESALKKLRDTEDVSTEIEAMQEEATAAGVQEKPKMGDMFKG) lie on the Cytoplasmic side of the membrane. A helical membrane pass occupies residues 300 to 320 (ALLWPMSIAIMMMLAQQLSGI). Residues 315–316 (QQ), Asn321, and Asn352 each bind D-glucose. At 321-341 (NVAMFYSTVIFRGAGLTGNEP) the chain is on the extracellular side. The helical transmembrane segment at 342–362 (FYATIGMGAVNVIMTLISVWL) threads the bilayer. The Cytoplasmic segment spans residues 363-373 (VDHPKFGRRSL). The chain crosses the membrane as a helical span at residues 374 to 394 (LLAGLTGMFVSTLLLVGALTI). Residues 395–409 (QNSGGDKWASYSAIG) lie on the Extracellular side of the membrane. A helical transmembrane segment spans residues 410-430 (FVLLFVISFATGPGAIPWFFV). Trp427 lines the D-glucose pocket. The Cytoplasmic segment spans residues 431-445 (SEIFDSSARGNANSI). Residues 446 to 464 (AVMVNWAANLLVGLTFLPI) form a helical membrane-spanning segment. Residues 465–470 (NNLMQQ) are Extracellular-facing. Residues 471–491 (YSFFIFSGFLAFFIFYTWKFV) traverse the membrane as a helical segment. Over 492–510 (PETKGKSIEQIQAEFEKRK) the chain is Cytoplasmic.

It belongs to the major facilitator superfamily. Sugar transporter (TC 2.A.1.1) family. Glucose transporter subfamily. Isoform a is expressed in pharyngeal muscle and intestinal cells in both embryos and adults (at protein level).

The protein resides in the cell membrane. The protein localises to the basolateral cell membrane. In terms of biological role, facilitative glucose transporter that plays a role in glucose metabolism and regulation of longevity. May also play a role in lipid metabolism. Glucose transport activity of isoform a is competitively inhibited by mannose, galactose and fructose, suggesting ability to transport also other hexose sugars. The sequence is that of Facilitated glucose transporter protein 1 from Caenorhabditis elegans.